Consider the following 117-residue polypeptide: UPF0102 protein FTW_1281 (117 aa).

Belongs to the UPF0102 family.

This is UPF0102 protein FTW_1281 from Francisella tularensis subsp. tularensis (strain WY96-3418).